The primary structure comprises 320 residues: Cytochrome f (320 aa).

The N-terminal stretch at 1-35 (MQNRNTFSWVKEQMTRSISVSIIIYVITRTSISNA) is a signal peptide. Heme contacts are provided by Y36, C56, C59, and H60. A helical transmembrane segment spans residues 286 to 306 (VQGLLFFLASIILAQIFLVLK).

This sequence belongs to the cytochrome f family. In terms of assembly, the 4 large subunits of the cytochrome b6-f complex are cytochrome b6, subunit IV (17 kDa polypeptide, petD), cytochrome f and the Rieske protein, while the 4 small subunits are PetG, PetL, PetM and PetN. The complex functions as a dimer. The cofactor is heme.

The protein localises to the plastid. Its subcellular location is the chloroplast thylakoid membrane. Functionally, component of the cytochrome b6-f complex, which mediates electron transfer between photosystem II (PSII) and photosystem I (PSI), cyclic electron flow around PSI, and state transitions. In Chloranthus spicatus (Chulantree), this protein is Cytochrome f.